The primary structure comprises 545 residues: Methionine--tRNA ligase (545 aa).

Residues 12-22 (PYANGSLHIGH) carry the 'HIGH' region motif. Positions 143, 146, 156, and 159 each coordinate Zn(2+). The short motif at 329 to 333 (KLSKS) is the 'KMSKS' region element. An ATP-binding site is contributed by Lys332.

It belongs to the class-I aminoacyl-tRNA synthetase family. MetG type 1 subfamily. As to quaternary structure, monomer. Zn(2+) serves as cofactor.

Its subcellular location is the cytoplasm. It carries out the reaction tRNA(Met) + L-methionine + ATP = L-methionyl-tRNA(Met) + AMP + diphosphate. In terms of biological role, is required not only for elongation of protein synthesis but also for the initiation of all mRNA translation through initiator tRNA(fMet) aminoacylation. This Buchnera aphidicola subsp. Baizongia pistaciae (strain Bp) protein is Methionine--tRNA ligase (metG).